Consider the following 150-residue polypeptide: uncharacterized protein (150 aa).

The signal sequence occupies residues 1 to 23 (MYSILIACLVLLLCLIIYVGHRA).

Belongs to the asfivirus EP152R family.

It is found in the virion. This is an uncharacterized protein from African swine fever virus (isolate Tick/South Africa/Pretoriuskop Pr4/1996) (ASFV).